Here is a 267-residue protein sequence, read N- to C-terminus: uncharacterized protein (267 aa).

The WD repeat unit spans residues 50-90; it reads PGLNAVTASKFSPDGRWLLNIADGSGYVQLWDTAKGERVKT.

This is an uncharacterized protein from Deinococcus radiodurans (strain ATCC 13939 / DSM 20539 / JCM 16871 / CCUG 27074 / LMG 4051 / NBRC 15346 / NCIMB 9279 / VKM B-1422 / R1).